Consider the following 188-residue polypeptide: RWD domain-containing protein 4 (188 aa).

Position 2 is an N-acetylserine (Ser2). Residues 9-111 (MELEALRSIY…EYAKDNKEQF (103 aa)) enclose the RWD domain. A disordered region spans residues 132–167 (TPNTAPSSKKKDKKEQLSKAQKRKLADKTDHKGELP). Basic and acidic residues predominate over residues 155–166 (KLADKTDHKGEL).

The sequence is that of RWD domain-containing protein 4 (RWDD4) from Homo sapiens (Human).